The primary structure comprises 393 residues: S-adenosylmethionine synthase (393 aa).

Position 9 (Glu-9) interacts with Mg(2+). Position 15 (His-15) interacts with ATP. Asp-17 contributes to the Mg(2+) binding site. Position 43 (Glu-43) interacts with K(+). L-methionine-binding residues include Glu-56 and Gln-99. ATP-binding positions include 167-169 (DGK), 235-238 (SGRF), Asp-246, 252-253 (RK), Ala-269, Lys-273, and Lys-277. Asp-246 provides a ligand contact to L-methionine. Lys-277 contributes to the L-methionine binding site.

It belongs to the AdoMet synthase family. In terms of assembly, homotetramer; dimer of dimers. It depends on Mn(2+) as a cofactor. Requires Mg(2+) as cofactor. The cofactor is Co(2+). K(+) is required as a cofactor.

It localises to the cytoplasm. It carries out the reaction L-methionine + ATP + H2O = S-adenosyl-L-methionine + phosphate + diphosphate. It participates in amino-acid biosynthesis; S-adenosyl-L-methionine biosynthesis; S-adenosyl-L-methionine from L-methionine: step 1/1. With respect to regulation, increased activity in the presence of 25 percent acetonitrile, methanol or dimethylformamide. Functionally, catalyzes the formation of S-adenosylmethionine from methionine and ATP. This Acacia koa (Koa tree) protein is S-adenosylmethionine synthase.